The primary structure comprises 445 residues: tRNA modification GTPase MnmE (445 aa).

Positions 20, 79, and 119 each coordinate (6S)-5-formyl-5,6,7,8-tetrahydrofolate. Residues 215 to 371 enclose the TrmE-type G domain; it reads GLKLAIIGPP…ILKNIENIAE (157 aa). Residue Asn225 participates in K(+) binding. GTP contacts are provided by residues 225 to 230, 244 to 250, and 269 to 272; these read NTGKSS, SNIAGTT, and DTAG. Ser229 provides a ligand contact to Mg(2+). Residues Ser244, Ile246, and Thr249 each coordinate K(+). Thr250 contacts Mg(2+). Lys445 contributes to the (6S)-5-formyl-5,6,7,8-tetrahydrofolate binding site.

The protein belongs to the TRAFAC class TrmE-Era-EngA-EngB-Septin-like GTPase superfamily. TrmE GTPase family. Homodimer. Heterotetramer of two MnmE and two MnmG subunits. The cofactor is K(+).

The protein resides in the cytoplasm. Exhibits a very high intrinsic GTPase hydrolysis rate. Involved in the addition of a carboxymethylaminomethyl (cmnm) group at the wobble position (U34) of certain tRNAs, forming tRNA-cmnm(5)s(2)U34. This chain is tRNA modification GTPase MnmE, found in Rickettsia typhi (strain ATCC VR-144 / Wilmington).